A 146-amino-acid polypeptide reads, in one-letter code: Phospholipase A2, membrane associated (146 aa).

Positions 1 to 21 (MKVLLLLAASIMAFGSIQVQG) are cleaved as a signal peptide. Cystine bridges form between cysteine 47/cysteine 139, cysteine 49/cysteine 65, cysteine 64/cysteine 119, cysteine 70/cysteine 146, cysteine 71/cysteine 112, cysteine 80/cysteine 105, and cysteine 98/cysteine 110. Residues histidine 48, glycine 50, and glycine 52 each coordinate Ca(2+). Histidine 68 is an active-site residue. Aspartate 69 is a binding site for Ca(2+). The active site involves aspartate 113.

Belongs to the phospholipase A2 family. Requires Ca(2+) as cofactor. In terms of tissue distribution, mainly in the Paneth cells adjacent to the stem population in the small intestines.

The protein resides in the secreted. It localises to the cell membrane. It is found in the mitochondrion outer membrane. The catalysed reaction is a 1,2-diacyl-sn-glycero-3-phosphoethanolamine + H2O = a 1-acyl-sn-glycero-3-phosphoethanolamine + a fatty acid + H(+). It catalyses the reaction 1-hexadecanoyl-2-(9Z-octadecenoyl)-sn-glycero-3-phosphoethanolamine + H2O = 1-hexadecanoyl-sn-glycero-3-phosphoethanolamine + (9Z)-octadecenoate + H(+). The enzyme catalyses 1-hexadecanoyl-2-(9Z,12Z-octadecadienoyl)-sn-glycero-3-phosphoethanolamine + H2O = 1-hexadecanoyl-sn-glycero-3-phosphoethanolamine + (9Z,12Z)-octadecadienoate + H(+). It carries out the reaction 1-hexadecanoyl-2-(5Z,8Z,11Z,14Z-eicosatetraenoyl)-sn-glycero-3-phosphoethanolamine + H2O = 1-hexadecanoyl-sn-glycero-3-phosphoethanolamine + (5Z,8Z,11Z,14Z)-eicosatetraenoate + H(+). The catalysed reaction is N-hexadecanoyl-1,2-di-(9Z-octadecenoyl)-sn-glycero-3-phosphoethanolamine + H2O = N-hexadecanoyl-1-(9Z-octadecenoyl)-sn-glycero-3-phosphoethanolamine + (9Z)-octadecenoate + H(+). It catalyses the reaction 1,2-dihexadecanoyl-sn-glycero-3-phospho-(1'-sn-glycerol) + H2O = 1-hexadecanoyl-sn-glycero-3-phospho-(1'-sn-glycerol) + hexadecanoate + H(+). The enzyme catalyses 1-hexadecanoyl-2-(9Z-octadecenoyl)-sn-glycero-3-phosphoglycerol + H2O = 1-hexadecanoyl-sn-glycero-3-phosphoglycerol + (9Z)-octadecenoate + H(+). It carries out the reaction 1-hexadecanoyl-2-(9Z-octadecenoyl)-sn-glycero-3-phospho-(1'-sn-glycerol) + H2O = 1-hexadecanoyl-sn-glycero-3-phospho-(1'-sn-glycerol) + (9Z)-octadecenoate + H(+). The catalysed reaction is a 1,2-diacyl-sn-glycero-3-phosphocholine + H2O = a 1-acyl-sn-glycero-3-phosphocholine + a fatty acid + H(+). It catalyses the reaction 1,2-dihexadecanoyl-sn-glycero-3-phosphocholine + H2O = 1-hexadecanoyl-sn-glycero-3-phosphocholine + hexadecanoate + H(+). The enzyme catalyses 1-hexadecanoyl-2-(9Z-octadecenoyl)-sn-glycero-3-phosphocholine + H2O = 1-hexadecanoyl-sn-glycero-3-phosphocholine + (9Z)-octadecenoate + H(+). It carries out the reaction 1-hexadecanoyl-2-(9Z,12Z-octadecadienoyl)-sn-glycero-3-phosphocholine + H2O = (9Z,12Z)-octadecadienoate + 1-hexadecanoyl-sn-glycero-3-phosphocholine + H(+). The catalysed reaction is 1-hexadecanoyl-2-(4Z,7Z,10Z,13Z,16Z,19Z-docosahexaenoyl)-sn-glycero-3-phosphocholine + H2O = (4Z,7Z,10Z,13Z,16Z,19Z)-docosahexaenoate + 1-hexadecanoyl-sn-glycero-3-phosphocholine + H(+). Functionally, secretory calcium-dependent phospholipase A2 that primarily targets extracellular phospholipids with implications in host antimicrobial defense, inflammatory response and tissue regeneration. Hydrolyzes the ester bond of the fatty acyl group attached at sn-2 position of phospholipids (phospholipase A2 activity) with preference for phosphatidylethanolamines and phosphatidylglycerols over phosphatidylcholines. Contributes to lipid remodeling of cellular membranes and generation of lipid mediators involved in pathogen clearance. Displays bactericidal activity against Gram-positive bacteria by directly hydrolyzing phospholipids of the bacterial membrane. Upon sterile inflammation, targets membrane phospholipids of extracellular mitochondria released from activated platelets, generating free unsaturated fatty acids such as arachidonate that is used by neighboring leukocytes to synthesize inflammatory eicosanoids such as leukotrienes. Simultaneously, by compromising mitochondrial membrane integrity, promotes the release in circulation of potent damage-associated molecular pattern molecules that activate the innate immune response. Plays a stem cell regulator role in the intestinal crypt. Within intracellular compartment mediates Paneth cell differentiation and its stem cell supporting functions by inhibiting Wnt signaling pathway in intestinal stem cell (ICS). Secreted in the intestinal lumen upon inflammation, acts in an autocrine way and promotes prostaglandin E2 synthesis that stimulates Wnt signaling pathway in ICS cells and tissue regeneration. May play a role in the biosynthesis of N-acyl ethanolamines that regulate energy metabolism and inflammation. Hydrolyzes N-acyl phosphatidylethanolamines to N-acyl lysophosphatidylethanolamines, which are further cleaved by a lysophospholipase D to release N-acyl ethanolamines. Independent of its catalytic activity, acts as a ligand for integrins. Binds to and activates integrins ITGAV:ITGB3, ITGA4:ITGB1 and ITGA5:ITGB1. Binds to a site (site 2) which is distinct from the classical ligand-binding site (site 1) and induces integrin conformational changes and enhanced ligand binding to site 1. Induces cell proliferation in an integrin-dependent manner. The polypeptide is Phospholipase A2, membrane associated (Pla2g2a) (Mus musculus (Mouse)).